Consider the following 620-residue polypeptide: Zinc metalloproteinase-disintegrin-like ACLD (620 aa).

Residues 1 to 20 (MIQVLLVTLCLAVFPYQGSS) form the signal peptide. Positions 21 to 189 (IILESGNVND…KKASQLNLTP (169 aa)) are excised as a propeptide. Positions 199 to 395 (KYVEFVVVLD…RRPKCILNEP (197 aa)) constitute a Peptidase M12B domain. Glutamate 202 contributes to the Ca(2+) binding site. 2 N-linked (GlcNAc...) asparagine glycosylation sites follow: asparagine 259 and asparagine 265. Aspartate 286 provides a ligand contact to Ca(2+). 3 disulfides stabilise this stretch: cysteine 310/cysteine 390, cysteine 350/cysteine 374, and cysteine 352/cysteine 357. Histidine 335 lines the Zn(2+) pocket. Glutamate 336 is a catalytic residue. Residues histidine 339 and histidine 345 each contribute to the Zn(2+) site. Asparagine 373 carries an N-linked (GlcNAc...) asparagine glycan. Residues cysteine 390 and asparagine 393 each coordinate Ca(2+). Asparagine 396 carries an N-linked (GlcNAc...) asparagine glycan. Residues 403–489 (PPVCGNELLE…ECPTDRFQRN (87 aa)) form the Disintegrin domain. 6 residues coordinate Ca(2+): valine 405, asparagine 408, leucine 410, glutamate 412, glutamate 415, and aspartate 418. 14 disulfide bridges follow: cysteine 406/cysteine 435, cysteine 417/cysteine 430, cysteine 419/cysteine 425, cysteine 429/cysteine 452, cysteine 443/cysteine 449, cysteine 448/cysteine 474, cysteine 461/cysteine 481, cysteine 468/cysteine 500, cysteine 493/cysteine 505, cysteine 512/cysteine 562, cysteine 527/cysteine 573, cysteine 540/cysteine 550, cysteine 557/cysteine 599, and cysteine 593/cysteine 604. Positions 467–469 (DCD) match the D/ECD-tripeptide motif. Asparagine 502 and asparagine 536 each carry an N-linked (GlcNAc...) asparagine glycan.

Belongs to the venom metalloproteinase (M12B) family. P-III subfamily. P-IIIa sub-subfamily. As to quaternary structure, monomer. The cofactor is Zn(2+). Expressed by the venom gland.

The protein resides in the secreted. Its activity is regulated as follows. Inhibited by EDTA and O-phenanthroline. Not inhibited by PMSF, benzamidine, irreversible serine-proteinase inhibitors and cysteine proteinase inhibitor E-64. In terms of biological role, is a potent activator of prothrombin (F2). Does not elicit any hemorrhagic response. Barely inhibits collagen-induced platelet aggregation. Binds neither collagen, nor the jararhagin-monoclonal antibody MAJar3. Hydrolyzes the Aalpha-chain of fibrin and fibrinogen, without affecting the Bbeta- and gamma-chains. Is capable of triggering endothelial pro-inflammatory and procoagulant cell responses, but fails to trigger apoptosis. Induces von Willebrand factor release, and the expression of both ICAM1 and E-selectin (SELE) (without increase in VCAM1) in endothelial cells (HUVEC). Is also able to up-regulate the synthesis of the coagulation factor TF (F3). Enhances nitric oxide (NO) generation, prostacyclin production and interleukin-8 release. The chain is Zinc metalloproteinase-disintegrin-like ACLD from Agkistrodon contortrix laticinctus (Broad-banded copperhead).